We begin with the raw amino-acid sequence, 76 residues long: Cytochrome c oxidase subunit 6C-1 (76 aa).

At 2 to 10 (SLAKPAMRG) the chain is on the mitochondrial matrix side. The chain crosses the membrane as a helical span at residues 11 to 51 (LLGKRLRFHLPIAFTLSLVAALGFKYGVTEPRKQAYADFYK). Topologically, residues 52–76 (QYDAVKDFNAMREAGIFESVRPSGE) are mitochondrial intermembrane.

Belongs to the cytochrome c oxidase subunit 6c family. In terms of assembly, component of the cytochrome c oxidase (complex IV, CIV), a multisubunit enzyme composed of 14 subunits. The complex is composed of a catalytic core of 3 subunits MT-CO1, MT-CO2 and MT-CO3, encoded in the mitochondrial DNA, and 11 supernumerary subunits COX4I, COX5A, COX5B, COX6A, COX6B, COX6C, COX7A, COX7B, COX7C, COX8 and NDUFA4, which are encoded in the nuclear genome. The complex exists as a monomer or a dimer and forms supercomplexes (SCs) in the inner mitochondrial membrane with NADH-ubiquinone oxidoreductase (complex I, CI) and ubiquinol-cytochrome c oxidoreductase (cytochrome b-c1 complex, complex III, CIII), resulting in different assemblies (supercomplex SCI(1)III(2)IV(1) and megacomplex MCI(2)III(2)IV(2)).

Its subcellular location is the mitochondrion inner membrane. The protein operates within energy metabolism; oxidative phosphorylation. Component of the cytochrome c oxidase, the last enzyme in the mitochondrial electron transport chain which drives oxidative phosphorylation. The respiratory chain contains 3 multisubunit complexes succinate dehydrogenase (complex II, CII), ubiquinol-cytochrome c oxidoreductase (cytochrome b-c1 complex, complex III, CIII) and cytochrome c oxidase (complex IV, CIV), that cooperate to transfer electrons derived from NADH and succinate to molecular oxygen, creating an electrochemical gradient over the inner membrane that drives transmembrane transport and the ATP synthase. Cytochrome c oxidase is the component of the respiratory chain that catalyzes the reduction of oxygen to water. Electrons originating from reduced cytochrome c in the intermembrane space (IMS) are transferred via the dinuclear copper A center (CU(A)) of subunit 2 and heme A of subunit 1 to the active site in subunit 1, a binuclear center (BNC) formed by heme A3 and copper B (CU(B)). The BNC reduces molecular oxygen to 2 water molecules using 4 electrons from cytochrome c in the IMS and 4 protons from the mitochondrial matrix. In Thunnus obesus (Bigeye tuna), this protein is Cytochrome c oxidase subunit 6C-1.